Consider the following 110-residue polypeptide: Snake venom vascular endothelial growth factor toxin HF (110 aa).

Q1 bears the Pyrrolidone carboxylic acid mark. Intrachain disulfides connect C14–C56, C45–C91, and C49–C93.

The protein belongs to the PDGF/VEGF growth factor family. Snake venom VEGF subfamily. As to quaternary structure, homodimer; disulfide-linked. Interacts with VEGF receptor-2 (KDR) with high affinity. Expressed by the venom gland.

The protein resides in the secreted. In terms of biological role, snake venom VEGFs that may contribute to venom dispersion and prey subjugation by inducing vascular permeability and hypotension. This protein induces an increase in capillary permeability after intradermal injection, as well as a drastic hypotensive effect after intravenous injection. The hypotension is mediated by nitric oxide (NO), which is produced by VEGF-activated endothelium NO synthase. Also induces angiogenesis in vitro, probably through VEGF receptor (KDR/VEGFR-2) signaling. This is Snake venom vascular endothelial growth factor toxin HF from Vipera aspis aspis (Aspic viper).